We begin with the raw amino-acid sequence, 308 residues long: Ribosomal RNA small subunit methyltransferase H (308 aa).

Residues 36–38 (GGH), D55, F86, D103, and Q110 contribute to the S-adenosyl-L-methionine site.

Belongs to the methyltransferase superfamily. RsmH family.

The protein localises to the cytoplasm. It carries out the reaction cytidine(1402) in 16S rRNA + S-adenosyl-L-methionine = N(4)-methylcytidine(1402) in 16S rRNA + S-adenosyl-L-homocysteine + H(+). Specifically methylates the N4 position of cytidine in position 1402 (C1402) of 16S rRNA. This is Ribosomal RNA small subunit methyltransferase H from Helicobacter pylori (strain HPAG1).